The chain runs to 226 residues: Isoprenyl transferase (226 aa).

The active site involves Asp12. Mg(2+) is bound at residue Asp12. Substrate-binding positions include 13-16, Trp17, Lys25, His29, and 57-59; these read GNAR and SFE. Asn60 acts as the Proton acceptor in catalysis. Substrate is bound by residues Trp61, Arg63, Arg174, and 180-182; that span reads RIS. Glu193 serves as a coordination point for Mg(2+).

This sequence belongs to the UPP synthase family. In terms of assembly, homodimer. The cofactor is Mg(2+).

Functionally, catalyzes the condensation of isopentenyl diphosphate (IPP) with allylic pyrophosphates generating different type of terpenoids. In Rickettsia prowazekii (strain Madrid E), this protein is Isoprenyl transferase.